We begin with the raw amino-acid sequence, 357 residues long: MAEAAPAIEAILAEYGELEQRLADPDLHADAGAARKVGRRFAQISPIVATYRKLEAARGDLEAARELAADDASFAAEVDELTDQIGDLDRALTDLLAPRDPHDADDIVLEVKSGEGGEESALFAADLARMYIRYAERHGWTVTMLGETTSDLGGYKDATLSIASKGDSADGVWARLKFEGGVHRVQRVPVTESQGRVHTSAAGVLVYPEPDEVEQVQIDESDLRVDVYRSSGKGGQGVNTTDSAVRITHLPTGIVVTCQNERSQLQNKARAMQVLAARLQALAEEQASADASADRASQIRTVDRSERIRTYNFPENRIADHRINFKAHNLDQVLDGDLDPLLDALAAADRQARLQNT.

Glutamine 236 carries the post-translational modification N5-methylglutamine.

The protein belongs to the prokaryotic/mitochondrial release factor family. In terms of processing, methylated by PrmC. Methylation increases the termination efficiency of RF1.

It localises to the cytoplasm. Functionally, peptide chain release factor 1 directs the termination of translation in response to the peptide chain termination codons UAG and UAA. The chain is Peptide chain release factor 1 from Mycolicibacterium gilvum (strain PYR-GCK) (Mycobacterium gilvum (strain PYR-GCK)).